Consider the following 443-residue polypeptide: MSVLLFGASHRSAPVPVLEKLAIGEADQPKIIEHILQSPLVTEVMVLSTCNRVEVYAVVEAFHGGLTVIGEAIARHAGMGMNELTKYAYVRYSEAAVEHLFAVASGLDSMVVGEQQVLGQVRNAYATAESHQAVGRVLHELSQSALRVGKRVHSETGIDAAGASVVSVALNLADNKLDGLPGRTAAVVGAGSMGSLATAQLIRAGIDNLWVVNRSAERARRLAATAREAGVNAQAITLDNLDQALAQADVVVSCTGAVRPVISLADVHHALEGGRQLVFCDLGMPRDVDPTVAGLPGVVVVDMERIQREPTARAAANDAGAARQIVNDEVARYLTGERMAEVTPTVTALRQRAAEVVEAELLRLDGRLPGLAGAERDEVAKTVRRVVDKLLHAPTVRVKQLASAPGGDSYAEALRELFELDPHTVEAVATAGELPLATKELHE.

Substrate contacts are provided by residues 49–52 (TCNR), Ser109, 114–116 (EQQ), and Gln120. Cys50 acts as the Nucleophile in catalysis. 189 to 194 (GAGSMG) contributes to the NADP(+) binding site.

The protein belongs to the glutamyl-tRNA reductase family. In terms of assembly, homodimer.

It carries out the reaction (S)-4-amino-5-oxopentanoate + tRNA(Glu) + NADP(+) = L-glutamyl-tRNA(Glu) + NADPH + H(+). It participates in porphyrin-containing compound metabolism; protoporphyrin-IX biosynthesis; 5-aminolevulinate from L-glutamyl-tRNA(Glu): step 1/2. Catalyzes the NADPH-dependent reduction of glutamyl-tRNA(Glu) to glutamate 1-semialdehyde (GSA). The protein is Glutamyl-tRNA reductase of Mycobacteroides abscessus (strain ATCC 19977 / DSM 44196 / CCUG 20993 / CIP 104536 / JCM 13569 / NCTC 13031 / TMC 1543 / L948) (Mycobacterium abscessus).